We begin with the raw amino-acid sequence, 85 residues long: Putative transmembrane protein ORF85 (85 aa).

2 helical membrane passes run 12–32 (FPPTTLIVLALGSAIAYKFLS) and 44–64 (LGIILVFLGHGGVISTIGAGI).

The protein resides in the host membrane. The chain is Putative transmembrane protein ORF85 from Acidianus convivator (ABV).